Here is a 105-residue protein sequence, read N- to C-terminus: Probable non-functional immunoglobulin lambda variable 5-48 (105 aa).

An N-terminal signal peptide occupies residues 1–19; the sequence is MAWTPLLLLFLSHCTGSLS. A framework-1 region spans residues 20-44; the sequence is QAVLTQPTSLSASPGASARLTCTLR. Residues 20–105 enclose the Ig-like domain; that stretch reads QAVLTQPTSL…NAGILFISGL (86 aa). The interval 45–53 is complementarity-determining-1; it reads SGISVGSYR. The interval 54–70 is framework-2; it reads IYWYQQKPGSPPRYLLN. A complementarity-determining-2 region spans residues 71 to 77; sequence YYSDSDK. Residues 78 to 105 are framework-3; sequence HQGSGVPSRFSGSKDASTNAGILFISGL.

In terms of assembly, immunoglobulins are composed of two identical heavy chains and two identical light chains; disulfide-linked.

The protein localises to the secreted. It is found in the cell membrane. Its function is as follows. Probable non-functional open reading frame (ORF) of V region of the variable domain of immunoglobulin light chains. Non-functional ORF generally cannot participate in the synthesis of a productive immunoglobulin chain due to altered V-(D)-J or switch recombination and/or splicing site (at mRNA level) and/or conserved amino acid change (protein level). Immunoglobulins, also known as antibodies, are membrane-bound or secreted glycoproteins produced by B lymphocytes. In the recognition phase of humoral immunity, the membrane-bound immunoglobulins serve as receptors which, upon binding of a specific antigen, trigger the clonal expansion and differentiation of B lymphocytes into immunoglobulins-secreting plasma cells. Secreted immunoglobulins mediate the effector phase of humoral immunity, which results in the elimination of bound antigens. The antigen binding site is formed by the variable domain of one heavy chain, together with that of its associated light chain. Thus, each immunoglobulin has two antigen binding sites with remarkable affinity for a particular antigen. The variable domains are assembled by a process called V-(D)-J rearrangement and can then be subjected to somatic hypermutations which, after exposure to antigen and selection, allow affinity maturation for a particular antigen. In Homo sapiens (Human), this protein is Probable non-functional immunoglobulin lambda variable 5-48.